A 320-amino-acid polypeptide reads, in one-letter code: BTB and MATH domain-containing protein 36 (320 aa).

In terms of domain architecture, MATH spans 7–136 (KGSIRFEIQN…DKHAVLEVQI (130 aa)). A BTB domain is found at 160 to 227 (TDVVLVLEGK…IYPTHMLINS (68 aa)).

The chain is BTB and MATH domain-containing protein 36 (bath-36) from Caenorhabditis elegans.